The sequence spans 642 residues: Threonine--tRNA ligase (642 aa).

A TGS domain is found at 1–61; sequence MPVVTLPDGS…DSDANLAIIT (61 aa). A catalytic region spans residues 243 to 534; it reads DHRKIGKQLD…LTEEYAGFFP (292 aa). Zn(2+) is bound by residues Cys-334, His-385, and His-511.

The protein belongs to the class-II aminoacyl-tRNA synthetase family. As to quaternary structure, homodimer. Zn(2+) is required as a cofactor.

The protein localises to the cytoplasm. It catalyses the reaction tRNA(Thr) + L-threonine + ATP = L-threonyl-tRNA(Thr) + AMP + diphosphate + H(+). In terms of biological role, catalyzes the attachment of threonine to tRNA(Thr) in a two-step reaction: L-threonine is first activated by ATP to form Thr-AMP and then transferred to the acceptor end of tRNA(Thr). Also edits incorrectly charged L-seryl-tRNA(Thr). This is Threonine--tRNA ligase from Photorhabdus laumondii subsp. laumondii (strain DSM 15139 / CIP 105565 / TT01) (Photorhabdus luminescens subsp. laumondii).